The sequence spans 239 residues: Pyridoxine 5'-phosphate synthase (239 aa).

A 3-amino-2-oxopropyl phosphate-binding site is contributed by Asn7. Position 9–10 (9–10 (DH)) interacts with 1-deoxy-D-xylulose 5-phosphate. Arg18 serves as a coordination point for 3-amino-2-oxopropyl phosphate. His43 functions as the Proton acceptor in the catalytic mechanism. 1-deoxy-D-xylulose 5-phosphate is bound by residues Arg45 and His50. Residue Glu70 is the Proton acceptor of the active site. Thr100 lines the 1-deoxy-D-xylulose 5-phosphate pocket. His191 serves as the catalytic Proton donor. 3-amino-2-oxopropyl phosphate contacts are provided by residues Gly192 and 213–214 (GH).

The protein belongs to the PNP synthase family. Homooctamer; tetramer of dimers.

The protein resides in the cytoplasm. It carries out the reaction 3-amino-2-oxopropyl phosphate + 1-deoxy-D-xylulose 5-phosphate = pyridoxine 5'-phosphate + phosphate + 2 H2O + H(+). Its pathway is cofactor biosynthesis; pyridoxine 5'-phosphate biosynthesis; pyridoxine 5'-phosphate from D-erythrose 4-phosphate: step 5/5. In terms of biological role, catalyzes the complicated ring closure reaction between the two acyclic compounds 1-deoxy-D-xylulose-5-phosphate (DXP) and 3-amino-2-oxopropyl phosphate (1-amino-acetone-3-phosphate or AAP) to form pyridoxine 5'-phosphate (PNP) and inorganic phosphate. The chain is Pyridoxine 5'-phosphate synthase from Synechococcus sp. (strain JA-2-3B'a(2-13)) (Cyanobacteria bacterium Yellowstone B-Prime).